Consider the following 448-residue polypeptide: ATP-dependent protease ATPase subunit HslU (448 aa).

Residues I23, 65 to 70 (GIGKTE), D263, E327, and R399 contribute to the ATP site.

This sequence belongs to the ClpX chaperone family. HslU subfamily. As to quaternary structure, a double ring-shaped homohexamer of HslV is capped on each side by a ring-shaped HslU homohexamer. The assembly of the HslU/HslV complex is dependent on binding of ATP.

Its subcellular location is the cytoplasm. Its function is as follows. ATPase subunit of a proteasome-like degradation complex; this subunit has chaperone activity. The binding of ATP and its subsequent hydrolysis by HslU are essential for unfolding of protein substrates subsequently hydrolyzed by HslV. HslU recognizes the N-terminal part of its protein substrates and unfolds these before they are guided to HslV for hydrolysis. In Borreliella burgdorferi (strain ATCC 35210 / DSM 4680 / CIP 102532 / B31) (Borrelia burgdorferi), this protein is ATP-dependent protease ATPase subunit HslU.